A 617-amino-acid polypeptide reads, in one-letter code: MRLCHSIILFNSLISISICSKADDPALLVASEFKEHFNVEEKQLETVEELLIKMKKLAHSRSFKGREFGHDAVEDSKKEVAISTQQGTINKKVSPFLFEGDIFLSRRQAVDILKALSKDKTKRLRRSFVSDKTATWKTMPIKYRFHESIDFYTISQIIAAIRFWEDSTCITFENVSDSPDGDYIEFFSGQGCYSMIGRNGGRQGISIGESCVKMGVIEHEIGHALGLWHEQSRPDALGYVTIERDFILPSYISDFLQRDDEIDTLGIPYDLGSVMHYGSTAFSVDQKSKTVVTRDSLYQQTIGQREKLSFYDVATINTAYCKDECKSEKTKCENGGYMRPSKCSECLCPDGLGGEKCEKNEDSKNAECGGIIKLTEEWKEIESPNYPDPGYEADQKCSWLLKAEKGKRVEIEFIEDFSFLCTSTCVDFVELKISDDLRNTGFRFCCYDKPEISFVSQTDTAIIIFRSQLSTDIGFKIQAKSTDAEPRTTIAPTIITTTLAPITVDAPNVWADWGEWSMCSRTCGGCGIRSRVRSCRSKKCEGRRQEFGTCNLKACPVDKHCAKLLSNNRLCNGKVCTKNDIAISSCDAPQCCPPFINVDGVCQSDQENQHDELWLSI.

An N-terminal signal peptide occupies residues 1-22 (MRLCHSIILFNSLISISICSKA). Residues 23 to 126 (DDPALLVASE…SKDKTKRLRR (104 aa)) constitute a propeptide that is removed on maturation. Residues 127-322 (SFVSDKTATW…VATINTAYCK (196 aa)) form the Peptidase M12A domain. 9 cysteine pairs are disulfide-bonded: C169/C321, C192/C211, C325/C346, C348/C357, C368/C397, C425/C445, C519/C550, C523/C555, and C535/C540. Residue N174 is glycosylated (N-linked (GlcNAc...) asparagine). H219 is a binding site for Zn(2+). The active site involves E220. Zn(2+) contacts are provided by H223 and H229. Residues 317–358 (NTAYCKDECKSEKTKCENGGYMRPSKCSECLCPDGLGGEKCE) enclose the EGF-like domain. The CUB domain maps to 368-482 (CGGIIKLTEE…IGFKIQAKST (115 aa)). Residues 507–556 (PNVWADWGEWSMCSRTCGGCGIRSRVRSCRSKKCEGRRQEFGTCNLKACP) enclose the TSP type-1 domain.

Requires Zn(2+) as cofactor. In terms of tissue distribution, expressed in hypodermal cells. Also detected in the hypodermal seam cells in L4 larvae and young adults. In old adult hermaphrodites, it localizes to the vulva (at protein level).

It is found in the secreted. Its function is as follows. Metalloprotease. Involved in molting, a process during larval stages in which a new cuticle is formed and the old cuticle is shed. The protein is Zinc metalloproteinase nas-36 (nas-36) of Caenorhabditis elegans.